The sequence spans 181 residues: Inner membrane-spanning protein YciB (181 aa).

Transmembrane regions (helical) follow at residues 19 to 39, 50 to 70, 80 to 100, 118 to 138, and 148 to 168; these read FFDI…QLIA, MHLI…IFHD, IVYA…KPIL, LTWY…YVAF, and FKVF…VVYL.

It belongs to the YciB family.

The protein resides in the cell inner membrane. In terms of biological role, plays a role in cell envelope biogenesis, maintenance of cell envelope integrity and membrane homeostasis. The sequence is that of Inner membrane-spanning protein YciB from Shewanella amazonensis (strain ATCC BAA-1098 / SB2B).